Reading from the N-terminus, the 598-residue chain is Probable translation initiation factor IF-2 (598 aa).

The region spanning 8 to 226 (IRQPIISVLG…VTGLAQRFLE (219 aa)) is the tr-type G domain. The G1 stretch occupies residues 17 to 24 (GHVDHGKT). 17–24 (GHVDHGKT) contacts GTP. The segment at 42 to 46 (GITQH) is G2. Residues 81–84 (DTPG) are G3. Residues 81–85 (DTPGH) and 135–138 (NKVD) each bind GTP. Positions 135-138 (NKVD) are G4. Residues 203 to 205 (SGV) form a G5 region.

The protein belongs to the TRAFAC class translation factor GTPase superfamily. Classic translation factor GTPase family. IF-2 subfamily.

Function in general translation initiation by promoting the binding of the formylmethionine-tRNA to ribosomes. Seems to function along with eIF-2. The protein is Probable translation initiation factor IF-2 of Methanopyrus kandleri (strain AV19 / DSM 6324 / JCM 9639 / NBRC 100938).